The chain runs to 217 residues: Protein-L-isoaspartate O-methyltransferase (217 aa).

The active site involves Ser64.

It belongs to the methyltransferase superfamily. L-isoaspartyl/D-aspartyl protein methyltransferase family.

It is found in the cytoplasm. It catalyses the reaction [protein]-L-isoaspartate + S-adenosyl-L-methionine = [protein]-L-isoaspartate alpha-methyl ester + S-adenosyl-L-homocysteine. Its function is as follows. Catalyzes the methyl esterification of L-isoaspartyl residues in peptides and proteins that result from spontaneous decomposition of normal L-aspartyl and L-asparaginyl residues. It plays a role in the repair and/or degradation of damaged proteins. The sequence is that of Protein-L-isoaspartate O-methyltransferase from Azorhizobium caulinodans (strain ATCC 43989 / DSM 5975 / JCM 20966 / LMG 6465 / NBRC 14845 / NCIMB 13405 / ORS 571).